Consider the following 274-residue polypeptide: Undecaprenyl-diphosphatase (274 aa).

Transmembrane regions (helical) follow at residues 9–29 (LEYL…FIPV), 47–67 (PGAS…AWYF), 95–115 (ILIG…FVPY), 120–140 (VLRS…FMYL), 161–181 (LIGF…GITI), 197–217 (FSFL…FISS), 224–244 (LGFF…LLAI), and 254–274 (NGLK…LLNL).

Belongs to the UppP family.

The protein resides in the cell inner membrane. It catalyses the reaction di-trans,octa-cis-undecaprenyl diphosphate + H2O = di-trans,octa-cis-undecaprenyl phosphate + phosphate + H(+). In terms of biological role, catalyzes the dephosphorylation of undecaprenyl diphosphate (UPP). Confers resistance to bacitracin. This is Undecaprenyl-diphosphatase from Prochlorococcus marinus (strain AS9601).